We begin with the raw amino-acid sequence, 69 residues long: U-scoloptoxin(21)-Sm2a (69 aa).

The N-terminal stretch at 1–21 is a signal peptide; that stretch reads MFFLGFIIVCASEEQSDNRLP. The interval 46–69 is disordered; the sequence is ANDPNGPGRRRRSPIVREEILRHP. Residues 60–69 are compositionally biased toward basic and acidic residues; that stretch reads IVREEILRHP.

It belongs to the scoloptoxin-21 family. Expressed by the venom gland.

The protein resides in the secreted. The sequence is that of U-scoloptoxin(21)-Sm2a from Scolopendra morsitans (Tanzanian blue ringleg centipede).